The following is a 444-amino-acid chain: ATP-dependent protease ATPase subunit HslU (444 aa).

Residues Ile20 and 62-67 contribute to the ATP site; that span reads GVGKTE. The segment at 130–158 is disordered; sequence EDRILDALVPPPRGASGEPERGEDNSARQ. Residues Asp257, Glu322, and Arg394 each coordinate ATP.

Belongs to the ClpX chaperone family. HslU subfamily. In terms of assembly, a double ring-shaped homohexamer of HslV is capped on each side by a ring-shaped HslU homohexamer. The assembly of the HslU/HslV complex is dependent on binding of ATP.

It is found in the cytoplasm. ATPase subunit of a proteasome-like degradation complex; this subunit has chaperone activity. The binding of ATP and its subsequent hydrolysis by HslU are essential for unfolding of protein substrates subsequently hydrolyzed by HslV. HslU recognizes the N-terminal part of its protein substrates and unfolds these before they are guided to HslV for hydrolysis. This chain is ATP-dependent protease ATPase subunit HslU, found in Bordetella pertussis (strain Tohama I / ATCC BAA-589 / NCTC 13251).